We begin with the raw amino-acid sequence, 1679 residues long: Maestro heat-like repeat-containing protein family member 2A (1679 aa).

15 HEAT repeats span residues 68 to 91 (ATTD…ISTQ), 92 to 128 (RKMN…QMRD), 190 to 229 (MPYM…TVQF), 293 to 313 (EQVY…GHWP), 314 to 350 (LFPS…ELHV), 380 to 417 (SYPK…ADDP), 422 to 459 (KTIY…SGFQ), 571 to 610 (PAPQ…SIAP), 614 to 654 (DMWE…SLKK), 737 to 774 (KTVL…ETVK), 848 to 887 (SALT…MKPF), 991 to 1028 (GQFG…LHVS), 1219 to 1261 (DPLM…SHGP), 1387 to 1425 (KLLR…GAPR), and 1632 to 1669 (MDLV…CNQH).

The polypeptide is Maestro heat-like repeat-containing protein family member 2A (Mroh2a) (Mus musculus (Mouse)).